A 271-amino-acid polypeptide reads, in one-letter code: Solute carrier family 66 member 2 (271 aa).

3 consecutive transmembrane segments (helical) span residues 8–28, 49–69, and 76–96; these read WLLV…MVFG, FSTY…LFWF, and PLLW…KLCT. The PQ-loop 1 domain maps to 14–80; the sequence is HQLVSWGAAA…RRFESPLLWQ (67 aa). At Ser-110 the chain carries Phosphoserine. The next 3 membrane-spanning stretches (helical) occupy residues 145–165, 168–188, and 232–252; these read DYVQ…YLSI, ALFV…LGVP, and VCGL…YAFA. The PQ-loop 2 domain maps to 178–233; that stretch reads AVLTEAMLGVPQLYRNHRHQSTEGMSIKMVLMWTSGDAFKTAYFLLKGAPLQFSVC.

The protein resides in the membrane. This Homo sapiens (Human) protein is Solute carrier family 66 member 2.